Consider the following 302-residue polypeptide: tRNA dimethylallyltransferase (302 aa).

8–15 (GSSGSGKS) contacts ATP. 10 to 15 (SGSGKS) serves as a coordination point for substrate. The tract at residues 33 to 36 (DSLS) is interaction with substrate tRNA.

This sequence belongs to the IPP transferase family. In terms of assembly, monomer. Requires Mg(2+) as cofactor.

The catalysed reaction is adenosine(37) in tRNA + dimethylallyl diphosphate = N(6)-dimethylallyladenosine(37) in tRNA + diphosphate. In terms of biological role, catalyzes the transfer of a dimethylallyl group onto the adenine at position 37 in tRNAs that read codons beginning with uridine, leading to the formation of N6-(dimethylallyl)adenosine (i(6)A). This Helicobacter hepaticus (strain ATCC 51449 / 3B1) protein is tRNA dimethylallyltransferase.